The sequence spans 459 residues: Bifunctional protein GlmU (459 aa).

A pyrophosphorylase region spans residues 1–230 (MSNRFAVILA…FDETLGVNDR (230 aa)). UDP-N-acetyl-alpha-D-glucosamine is bound by residues 9–12 (LAAG), K23, Q73, and 78–79 (GT). Position 103 (D103) interacts with Mg(2+). UDP-N-acetyl-alpha-D-glucosamine is bound by residues G140, E155, N170, and N228. N228 provides a ligand contact to Mg(2+). The tract at residues 231–251 (VALSQAEIIMKNRINRKNMVN) is linker. The tract at residues 252–459 (GVTIIDPSNT…VDQLLNKKKS (208 aa)) is N-acetyltransferase. UDP-N-acetyl-alpha-D-glucosamine is bound by residues R333 and K351. H363 functions as the Proton acceptor in the catalytic mechanism. Positions 366 and 377 each coordinate UDP-N-acetyl-alpha-D-glucosamine. Acetyl-CoA-binding positions include 386–387 (NY), A423, and R440.

This sequence in the N-terminal section; belongs to the N-acetylglucosamine-1-phosphate uridyltransferase family. It in the C-terminal section; belongs to the transferase hexapeptide repeat family. As to quaternary structure, homotrimer. The cofactor is Mg(2+).

Its subcellular location is the cytoplasm. The catalysed reaction is alpha-D-glucosamine 1-phosphate + acetyl-CoA = N-acetyl-alpha-D-glucosamine 1-phosphate + CoA + H(+). The enzyme catalyses N-acetyl-alpha-D-glucosamine 1-phosphate + UTP + H(+) = UDP-N-acetyl-alpha-D-glucosamine + diphosphate. It participates in nucleotide-sugar biosynthesis; UDP-N-acetyl-alpha-D-glucosamine biosynthesis; N-acetyl-alpha-D-glucosamine 1-phosphate from alpha-D-glucosamine 6-phosphate (route II): step 2/2. It functions in the pathway nucleotide-sugar biosynthesis; UDP-N-acetyl-alpha-D-glucosamine biosynthesis; UDP-N-acetyl-alpha-D-glucosamine from N-acetyl-alpha-D-glucosamine 1-phosphate: step 1/1. The protein operates within bacterial outer membrane biogenesis; LPS lipid A biosynthesis. In terms of biological role, catalyzes the last two sequential reactions in the de novo biosynthetic pathway for UDP-N-acetylglucosamine (UDP-GlcNAc). The C-terminal domain catalyzes the transfer of acetyl group from acetyl coenzyme A to glucosamine-1-phosphate (GlcN-1-P) to produce N-acetylglucosamine-1-phosphate (GlcNAc-1-P), which is converted into UDP-GlcNAc by the transfer of uridine 5-monophosphate (from uridine 5-triphosphate), a reaction catalyzed by the N-terminal domain. In Bacillus cereus (strain G9842), this protein is Bifunctional protein GlmU.